Here is a 122-residue protein sequence, read N- to C-terminus: UPF0102 protein BARBAKC583_1042 (122 aa).

This sequence belongs to the UPF0102 family.

This is UPF0102 protein BARBAKC583_1042 from Bartonella bacilliformis (strain ATCC 35685 / KC583 / Herrer 020/F12,63).